Consider the following 350-residue polypeptide: Phospho-2-dehydro-3-deoxyheptonate aldolase, Phe-sensitive (350 aa).

Residue K244 is modified to N6-acetyllysine.

This sequence belongs to the class-I DAHP synthase family. As to quaternary structure, homotetramer.

The enzyme catalyses D-erythrose 4-phosphate + phosphoenolpyruvate + H2O = 7-phospho-2-dehydro-3-deoxy-D-arabino-heptonate + phosphate. It participates in metabolic intermediate biosynthesis; chorismate biosynthesis; chorismate from D-erythrose 4-phosphate and phosphoenolpyruvate: step 1/7. Functionally, stereospecific condensation of phosphoenolpyruvate (PEP) and D-erythrose-4-phosphate (E4P) giving rise to 3-deoxy-D-arabino-heptulosonate-7-phosphate (DAHP). This is Phospho-2-dehydro-3-deoxyheptonate aldolase, Phe-sensitive (aroG) from Escherichia coli O157:H7.